The sequence spans 261 residues: uncharacterized protein (261 aa).

A compositionally biased stretch (polar residues) spans 20-34 (TMSTPFLESDNSNTQ). Residues 20–55 (TMSTPFLESDNSNTQSISGRIGSNNNSNSKNSGGIG) form a disordered region. Low complexity predominate over residues 35-51 (SISGRIGSNNNSNSKNS). Transmembrane regions (helical) follow at residues 113 to 133 (LFSGLFGGGFILTFILCILLL), 183 to 200 (LIFWITLYGTPIFWILFF), and 204 to 226 (IISLQFAWILIPIIALSLNMANV).

It belongs to the TVP23 family.

It is found in the membrane. This is an uncharacterized protein from Dictyostelium discoideum (Social amoeba).